A 245-amino-acid chain; its full sequence is 1-(5-phosphoribosyl)-5-[(5-phosphoribosylamino)methylideneamino] imidazole-4-carboxamide isomerase (245 aa).

The active-site Proton acceptor is the Asp-8. Catalysis depends on Asp-130, which acts as the Proton donor.

It belongs to the HisA/HisF family.

The protein localises to the cytoplasm. It carries out the reaction 1-(5-phospho-beta-D-ribosyl)-5-[(5-phospho-beta-D-ribosylamino)methylideneamino]imidazole-4-carboxamide = 5-[(5-phospho-1-deoxy-D-ribulos-1-ylimino)methylamino]-1-(5-phospho-beta-D-ribosyl)imidazole-4-carboxamide. Its pathway is amino-acid biosynthesis; L-histidine biosynthesis; L-histidine from 5-phospho-alpha-D-ribose 1-diphosphate: step 4/9. The sequence is that of 1-(5-phosphoribosyl)-5-[(5-phosphoribosylamino)methylideneamino] imidazole-4-carboxamide isomerase from Pseudomonas savastanoi pv. phaseolicola (strain 1448A / Race 6) (Pseudomonas syringae pv. phaseolicola (strain 1448A / Race 6)).